We begin with the raw amino-acid sequence, 402 residues long: Elongation factor Tu (402 aa).

Residues 10–212 (KPHVNIGTIG…AVDEYIPTPE (203 aa)) form the tr-type G domain. The tract at residues 19–26 (GHVDHGKT) is G1. Position 19-26 (19-26 (GHVDHGKT)) interacts with GTP. A Mg(2+)-binding site is contributed by T26. Residues 60–64 (GITIA) form a G2 region. A G3 region spans residues 81–84 (DCPG). Residues 81-85 (DCPGH) and 136-139 (NKED) each bind GTP. The segment at 136–139 (NKED) is G4. The interval 177 to 179 (SAF) is G5.

This sequence belongs to the TRAFAC class translation factor GTPase superfamily. Classic translation factor GTPase family. EF-Tu/EF-1A subfamily. As to quaternary structure, monomer.

It is found in the cytoplasm. The enzyme catalyses GTP + H2O = GDP + phosphate + H(+). Functionally, GTP hydrolase that promotes the GTP-dependent binding of aminoacyl-tRNA to the A-site of ribosomes during protein biosynthesis. The protein is Elongation factor Tu of Aliarcobacter butzleri (strain RM4018) (Arcobacter butzleri).